We begin with the raw amino-acid sequence, 205 residues long: MLAVYLHGFILSAAMILPLGPQNVFVMNQGIKRQHHLMSASLCALSDIILICAGIFGGSALLSRSPLLLALVTWGGVAFLMWYGWGALMAAWRGDGVASSATSVTQGRWRILVTLLAVTWLNPHVYLDTFVVLGSLGGQLLPDIRPWFALGAVTASIVWFFALAFLAAWLSPWLNRPVAQRIINLFVGGVMGFIAFQLARQGFGL.

A run of 6 helical transmembrane segments spans residues 1–21, 42–62, 67–87, 111–131, 147–167, and 185–205; these read MLAVYLHGFILSAAMILPLGP, LCALSDIILICAGIFGGSALL, LLLALVTWGGVAFLMWYGWGA, ILVTLLAVTWLNPHVYLDTFV, WFALGAVTASIVWFFALAFLA, and LFVGGVMGFIAFQLARQGFGL.

It belongs to the LysE/ArgO transporter (TC 2.A.75) family.

The protein localises to the cell inner membrane. It carries out the reaction L-arginine(in) = L-arginine(out). Functionally, involved in the export of arginine. Important to control the intracellular level of arginine and the correct balance between arginine and lysine. This is Arginine exporter protein ArgO from Yersinia pseudotuberculosis serotype O:3 (strain YPIII).